The primary structure comprises 329 residues: Caveolae-associated protein 4a (329 aa).

Disordered regions lie at residues 198–260 (SKEN…NIAK) and 274–329 (KERT…IHED). Residues 198 to 262 (SKENMNKTRE…RLKENIAKKA (65 aa)) are a coiled coil. Residues 201 to 220 (NMNKTREKTRENLSKTKESL) show a composition bias toward basic and acidic residues. Over residues 221-232 (SKTGQTLGTKFN) the composition is skewed to polar residues. Basic and acidic residues predominate over residues 242-260 (EQREKIKQSSERLKENIAK). The segment covering 279–290 (AEGQEGAEAEPA) has biased composition (low complexity). Threonine 292 is subject to Phosphothreonine. Residues 310–329 (TENKREGPVSEEGATRIHED) are compositionally biased toward basic and acidic residues.

This sequence belongs to the CAVIN family.

The protein resides in the cytoplasm. The protein localises to the myofibril. Its subcellular location is the sarcomere. It is found in the membrane. It localises to the caveola. In terms of biological role, induces rhoa activation and activates nppa transcription and myofibrillar organization through the rho/rock signaling pathway. The chain is Caveolae-associated protein 4a (cavin4a) from Danio rerio (Zebrafish).